The chain runs to 910 residues: MAKIYVDGKAYCMSESDNLLQACLSSGLNIPYFCWHPILGSLGACRQCAVTQYNSSLDNQGKLIMSCMTPVIDGTIISINDDTSKKFRSNIVELLLTNHPHDCPVCEEGGNCHLQDMTVMTTHNFRNYRFSKRTHKNQYLGSFIKHEMNRCIGCYRCVRYYRDYADGTDLDVYGANNNIYFGRIEHGVLENEHSGNLIEICPTGVFTDKTHSKKYNRKWDMQYAPGICQNCSIGCNISIGERYGEIRRIENRYHESINHYLICDLGRFGYSHTNLKNRPKKPILSTKENDVNILNFNKAIEYATNFFQRYKNVIGVGSIRSSIENNFALQELVGKENFCNGMSDKENSCIKLILDTLKNNQLYIPSLKEIESYDTILILGEDLTQTAPRIALAVRQAMKNKAKDLAELYGIPKWNAAPISQISEIYKNYLYIFNTHETKLDNIADWSYFSSIDNQVRFARAIAYELDKNLPDISFLDSNLRKKASLIAKKIISSKKVLIISGSHVYSKSIIQASINIAISINQKNINHVGLTFVTSSSNTLGLGILGGFSIENALKKLKNREAEAIIFMEYDLYRYISKHDCDVLFKKNDNIMSIDHQYTQTYKNSGFALPSVNFTESSGTIVNFEGRAQRFFQVYDPMFYDKKNCLYVSWKWLSFIKSKIEKKEISWINLDNIISEYSDKYPIFKKIKTAGPNASFRVHGQKIARSPHRSSGRTALRANINIHEPSQPKDADTMFSFSMEGYSQPNKSISHIPFAWFPGWNSPQAWNKFQKEIGRQLISGDSGVHLFKSNKKILDIYFHFSPKKFIKEKYWYVIPYYHIFGNEELTQYSSIIKQNIPLEYVLISELDGLELGLKKNSIVEFNCLNQDFRLPIRLSKHLTSKHIGLPIGRKGFPISLIGEKVKSLWEVMS.

A 2Fe-2S ferredoxin-type domain is found at 1 to 83; it reads MAKIYVDGKA…GTIISINDDT (83 aa). Positions 34, 45, 48, and 67 each coordinate [2Fe-2S] cluster. A 4Fe-4S His(Cys)3-ligated-type domain is found at 83-122; sequence TSKKFRSNIVELLLTNHPHDCPVCEEGGNCHLQDMTVMTT. [4Fe-4S] cluster-binding residues include His99, Cys103, Cys106, Cys112, Cys151, Cys154, Cys157, Cys201, Cys228, Cys231, Cys235, and Cys263. The 57-residue stretch at 221 to 277 folds into the 4Fe-4S Mo/W bis-MGD-type domain; that stretch reads MQYAPGICQNCSIGCNISIGERYGEIRRIENRYHESINHYLICDLGRFGYSHTNLKN.

It belongs to the complex I 75 kDa subunit family. Composed of 13 different subunits. Subunits NuoCD, E, F, and G constitute the peripheral sector of the complex. It depends on [2Fe-2S] cluster as a cofactor. [4Fe-4S] cluster serves as cofactor.

The catalysed reaction is a quinone + NADH + 5 H(+)(in) = a quinol + NAD(+) + 4 H(+)(out). Functionally, NDH-1 shuttles electrons from NADH, via FMN and iron-sulfur (Fe-S) centers, to quinones in the respiratory chain. Couples the redox reaction to proton translocation (for every two electrons transferred, four hydrogen ions are translocated across the cytoplasmic membrane), and thus conserves the redox energy in a proton gradient. In Buchnera aphidicola subsp. Schizaphis graminum (strain Sg), this protein is NADH-quinone oxidoreductase subunit G (nuoG).